Consider the following 122-residue polypeptide: Neuropeptide B (122 aa).

An N-terminal signal peptide occupies residues 1–24; the sequence is MAGPAMLVAAALALCLLLASPGLA. Position 25 is a 6'-bromotryptophan (tryptophan 25). Positions 56–122 are excised as a propeptide; sequence SEPRGGTRSL…LSLSASDCRK (67 aa).

This sequence belongs to the neuropeptide B/W family.

It localises to the secreted. Functionally, may be involved in the regulation of feeding, neuroendocrine system, memory, learning and in the afferent pain pathway. The chain is Neuropeptide B (NPB) from Bos taurus (Bovine).